The following is a 166-amino-acid chain: Small ribosomal subunit protein uS5 (166 aa).

The S5 DRBM domain occupies 11 to 74 (LQEKLVQVNR…EAARKNMVDV (64 aa)).

This sequence belongs to the universal ribosomal protein uS5 family. In terms of assembly, part of the 30S ribosomal subunit. Contacts proteins S4 and S8.

With S4 and S12 plays an important role in translational accuracy. Its function is as follows. Located at the back of the 30S subunit body where it stabilizes the conformation of the head with respect to the body. The sequence is that of Small ribosomal subunit protein uS5 from Marinobacter nauticus (strain ATCC 700491 / DSM 11845 / VT8) (Marinobacter aquaeolei).